The chain runs to 285 residues: Bifunctional protein FolD (285 aa).

NADP(+)-binding positions include 166-168 and Ile-232; that span reads GAS.

The protein belongs to the tetrahydrofolate dehydrogenase/cyclohydrolase family. In terms of assembly, homodimer.

It catalyses the reaction (6R)-5,10-methylene-5,6,7,8-tetrahydrofolate + NADP(+) = (6R)-5,10-methenyltetrahydrofolate + NADPH. The enzyme catalyses (6R)-5,10-methenyltetrahydrofolate + H2O = (6R)-10-formyltetrahydrofolate + H(+). Its pathway is one-carbon metabolism; tetrahydrofolate interconversion. Functionally, catalyzes the oxidation of 5,10-methylenetetrahydrofolate to 5,10-methenyltetrahydrofolate and then the hydrolysis of 5,10-methenyltetrahydrofolate to 10-formyltetrahydrofolate. The polypeptide is Bifunctional protein FolD (Aliivibrio salmonicida (strain LFI1238) (Vibrio salmonicida (strain LFI1238))).